A 523-amino-acid chain; its full sequence is 26S proteasome regulatory subunit RPN3 (523 aa).

Ala-2 carries the post-translational modification N-acetylalanine. Residues 270–450 form the PCI domain; sequence ARYFFYLSKI…GFIETTELLN (181 aa). The residue at position 454 (Ser-454) is a Phosphoserine. Basic and acidic residues predominate over residues 480-495; it reads RYPEDKKTQQNEKSEN. The tract at residues 480 to 523 is disordered; that stretch reads RYPEDKKTQQNEKSENGENDDDTLDGDLMDDMSDISDLDDLGFL. A compositionally biased stretch (acidic residues) spans 496–523; sequence GENDDDTLDGDLMDDMSDISDLDDLGFL.

Belongs to the proteasome subunit S3 family. As to quaternary structure, the 26S proteasome is composed of a core protease, known as the 20S proteasome, capped at one or both ends by the 19S regulatory complex (RC). The RC is composed of at least 18 different subunits in two subcomplexes, the base and the lid, which form the portions proximal and distal to the 20S proteolytic core, respectively. In terms of processing, N-acetylated by NAT1.

Its function is as follows. Acts as a regulatory subunit of the 26S proteasome which is involved in the ATP-dependent degradation of ubiquitinated proteins. This Saccharomyces cerevisiae (strain ATCC 204508 / S288c) (Baker's yeast) protein is 26S proteasome regulatory subunit RPN3 (RPN3).